The following is a 258-amino-acid chain: Lysine-rich coiled-coil protein 1 (258 aa).

The disordered stretch occupies residues 142–258 (DNSTSTHQAS…MLWDQSILGF (117 aa)). A compositionally biased stretch (basic residues) spans 150–161 (ASHKQIHQKRKR). Basic and acidic residues-rich tracts occupy residues 162–175 (HPEE…EEWS), 183–213 (CKEI…TEKL), and 220–232 (KGRD…EERK). Residues 211–248 (EKLKNRKEKKGRDVVSKKEERKRTKKKKEQGQERTEEE) are a coiled coil.

This Pongo abelii (Sumatran orangutan) protein is Lysine-rich coiled-coil protein 1 (KRCC1).